A 260-amino-acid polypeptide reads, in one-letter code: Phosphatidate cytidylyltransferase (260 aa).

Helical transmembrane passes span 9 to 29, 46 to 66, 70 to 90, 102 to 122, 130 to 150, 172 to 192, and 196 to 216; these read IIAL…LMLF, MIKF…IIML, AGSW…FILL, FMDA…FMYL, LHYI…AYIF, FVGG…FVDF, and LWLL…GDLV.

This sequence belongs to the CDS family.

It is found in the cell membrane. The enzyme catalyses a 1,2-diacyl-sn-glycero-3-phosphate + CTP + H(+) = a CDP-1,2-diacyl-sn-glycerol + diphosphate. Its pathway is phospholipid metabolism; CDP-diacylglycerol biosynthesis; CDP-diacylglycerol from sn-glycerol 3-phosphate: step 3/3. The chain is Phosphatidate cytidylyltransferase (cdsA) from Staphylococcus saprophyticus subsp. saprophyticus (strain ATCC 15305 / DSM 20229 / NCIMB 8711 / NCTC 7292 / S-41).